Reading from the N-terminus, the 411-residue chain is NADH-quinone oxidoreductase subunit D (411 aa).

The protein belongs to the complex I 49 kDa subunit family. As to quaternary structure, NDH-1 is composed of 14 different subunits. Subunits NuoB, C, D, E, F, and G constitute the peripheral sector of the complex.

It localises to the cell inner membrane. It catalyses the reaction a quinone + NADH + 5 H(+)(in) = a quinol + NAD(+) + 4 H(+)(out). Functionally, NDH-1 shuttles electrons from NADH, via FMN and iron-sulfur (Fe-S) centers, to quinones in the respiratory chain. The immediate electron acceptor for the enzyme in this species is believed to be ubiquinone. Couples the redox reaction to proton translocation (for every two electrons transferred, four hydrogen ions are translocated across the cytoplasmic membrane), and thus conserves the redox energy in a proton gradient. The polypeptide is NADH-quinone oxidoreductase subunit D (Phenylobacterium zucineum (strain HLK1)).